Reading from the N-terminus, the 351-residue chain is Transcriptional activator POG1 (351 aa).

The segment covering 1–26 has biased composition (basic and acidic residues); that stretch reads MKQEPHRQSEEKEKPKGPMAVEREQH. Positions 1–56 are disordered; it reads MKQEPHRQSEEKEKPKGPMAVEREQHTSLSSGTTVTASTGDESTNSRPVESSQTEK. A compositionally biased stretch (polar residues) spans 27–56; the sequence is TSLSSGTTVTASTGDESTNSRPVESSQTEK. Phosphoserine is present on residues S152 and S168. 2 disordered regions span residues 234–256 and 291–351; these read PGMG…TPVM and QHQL…PPPT. Polar residues predominate over residues 241-256; the sequence is QLPTMSSNSESQTPVM. The residue at position 314 (S314) is a Phosphoserine.

This sequence belongs to the POG1 family. In terms of processing, phosphorylated by CDC28.

The protein localises to the nucleus. Functionally, transcriptional activator which promotes cell cycle recovery with CLN2, after pheromone induced G1 arrest, probably inhibiting the ability of STE20 to activate the pheromone response pathway. Binds the promoters of genes that function in cell cycle regulation, cytoskeletal organization, and spindle assembly. May also be involved in stress-resistance. The protein is Transcriptional activator POG1 (POG1) of Saccharomyces cerevisiae (strain ATCC 204508 / S288c) (Baker's yeast).